We begin with the raw amino-acid sequence, 601 residues long: Glutamyl-tRNA(Gln) amidotransferase subunit B, mitochondrial (601 aa).

The N-terminal 55 residues, 1-55, are a transit peptide targeting the mitochondrion; sequence MLRPWLRQCPRATRSLACPQCHLPRPQTARRALRPLPALSLSHPIRSLQTTTTES.

The protein belongs to the GatB/GatE family. GatB subfamily. As to quaternary structure, subunit of the heterotrimeric GatCAB amidotransferase (AdT) complex, composed of A, B and C subunits.

The protein localises to the mitochondrion. It catalyses the reaction L-glutamyl-tRNA(Gln) + L-glutamine + ATP + H2O = L-glutaminyl-tRNA(Gln) + L-glutamate + ADP + phosphate + H(+). Its function is as follows. Allows the formation of correctly charged Gln-tRNA(Gln) through the transamidation of misacylated Glu-tRNA(Gln) in the mitochondria. The reaction takes place in the presence of glutamine and ATP through an activated gamma-phospho-Glu-tRNA(Gln). This is Glutamyl-tRNA(Gln) amidotransferase subunit B, mitochondrial from Aspergillus niger (strain ATCC MYA-4892 / CBS 513.88 / FGSC A1513).